Here is a 494-residue protein sequence, read N- to C-terminus: Ell-associated factor Eaf (494 aa).

Positions 119–138 (KTRSEVTNKPSLMSATNAPM) are enriched in polar residues. 2 disordered regions span residues 119 to 212 (KTRS…PAWH) and 243 to 494 (QANI…DDDD). Residues 139–156 (SNGAPVPSSAAAGTGSAG) show a composition bias toward low complexity. Over residues 159–178 (ENSTMRISSKTKVSTGSRRN) the composition is skewed to polar residues. A Phosphoserine modification is found at Ser-188. 2 stretches are compositionally biased toward polar residues: residues 243–256 (QANISGSSTGSSAG) and 280–306 (QQLTQRSSPPMQQQQHQNYGRGSNNYA). Residues 307-319 (QQQQQQQQQQLQQ) are compositionally biased toward low complexity. The span at 320–332 (RASFSHSNHSNSM) shows a compositional bias: polar residues. Residues 344–373 (QTAQSMAQAAAALEQQIGGELSASSSSSES) are compositionally biased toward low complexity. The span at 374–389 (DSSDSDSGSDSDDSTE) shows a compositional bias: acidic residues. Positions 414-424 (HQQQQHMHQLP) are enriched in low complexity. Over residues 437–454 (SHHHHQQQQQSHHHHHHQ) the composition is skewed to basic residues. Composition is skewed to low complexity over residues 455–464 (QQQQQQHQQS) and 475–488 (NDLLQNDLQLSSNS).

It belongs to the EAF family.

It localises to the nucleus. Functionally, promotes transcriptional elongation by Su(Tpl)/ELL. Essential for development. The chain is Ell-associated factor Eaf from Drosophila virilis (Fruit fly).